The following is a 248-amino-acid chain: Putative insertion sequence ATP-binding protein y4uH (248 aa).

Position 106-113 (glycine 106–serine 113) interacts with ATP.

It belongs to the IS21/IS1162 putative ATP-binding protein family.

This Sinorhizobium fredii (strain NBRC 101917 / NGR234) protein is Putative insertion sequence ATP-binding protein y4uH.